The sequence spans 79 residues: UPF0180 protein Bcer98_1118 (79 aa).

It belongs to the UPF0180 family.

This Bacillus cytotoxicus (strain DSM 22905 / CIP 110041 / 391-98 / NVH 391-98) protein is UPF0180 protein Bcer98_1118.